The primary structure comprises 376 residues: Cell adhesion molecule CEACAM18 (376 aa).

Positions 1–30 are cleaved as a signal peptide; sequence MDFSRPSFSPWRWLTLVASLLTCGICQASG. Over 31-330 the chain is Extracellular; that stretch reads QIFISPDSLL…PLPTVNRELY (300 aa). 3 N-linked (GlcNAc...) asparagine glycosylation sites follow: N69, N95, and N110. Residues 229 to 314 enclose the Ig-like C2-type domain; it reads PDYVSLWTQP…TQLTFYRDVT (86 aa). An intrachain disulfide couples C257 to C298. The chain crosses the membrane as a helical span at residues 331 to 351; sequence IPGPLVIFLILLTSLGGAFVC. The Cytoplasmic portion of the chain corresponds to 352-376; it reads RVLVYSLFQSCSRGKTCHKCPWQTN.

The protein belongs to the immunoglobulin superfamily. CEA family. Mostly expressed in the small and large intestine and at lower levels also in other organs.

Its subcellular location is the membrane. The polypeptide is Cell adhesion molecule CEACAM18 (Mus musculus (Mouse)).